We begin with the raw amino-acid sequence, 185 residues long: NEDD8-conjugating enzyme UBE2F (185 aa).

Positions 1-21 (MLTLASKLKRDDGVKGSRTTS) are disordered. The interval 1 to 29 (MLTLASKLKRDDGVKGSRTTSTTLDSMRR) is interaction with uba3. The UBC core domain maps to 32 to 185 (VRDRLLVKEV…VEDYIKRYAR (154 aa)). The active-site Glycyl thioester intermediate is C116.

The protein belongs to the ubiquitin-conjugating enzyme family. UBE2F subfamily.

The catalysed reaction is [E1 NEDD8-activating enzyme]-S-[NEDD8 protein]-yl-L-cysteine + [E2 NEDD8-conjugating enzyme]-L-cysteine = [E1 NEDD8-activating enzyme]-L-cysteine + [E2 NEDD8-conjugating enzyme]-S-[NEDD8-protein]-yl-L-cysteine.. Its pathway is protein modification; protein neddylation. Its function is as follows. Accepts the ubiquitin-like protein NEDD8 from the UBA3-NAE1 E1 complex and catalyzes its covalent attachment to other proteins. Together with the E3 ubiquitin ligase rnf7/rbx2, specifically neddylates cullin-5 (cul5). Does not neddylate cul1, cul2, cul3, cul4a or cul4b. The protein is NEDD8-conjugating enzyme UBE2F (ube2f) of Xenopus laevis (African clawed frog).